The sequence spans 432 residues: 3-phosphoshikimate 1-carboxyvinyltransferase (432 aa).

Lys22, Ser23, and Arg27 together coordinate 3-phosphoshikimate. Lys22 contacts phosphoenolpyruvate. The phosphoenolpyruvate site is built by Gly96 and Arg127. Positions 173, 174, 175, 201, 316, 339, and 343 each coordinate 3-phosphoshikimate. Gln175 contacts phosphoenolpyruvate. Asp316 serves as the catalytic Proton acceptor. Residues Arg347, Arg391, and Lys416 each contribute to the phosphoenolpyruvate site.

Belongs to the EPSP synthase family. In terms of assembly, monomer.

The protein resides in the cytoplasm. The enzyme catalyses 3-phosphoshikimate + phosphoenolpyruvate = 5-O-(1-carboxyvinyl)-3-phosphoshikimate + phosphate. The protein operates within metabolic intermediate biosynthesis; chorismate biosynthesis; chorismate from D-erythrose 4-phosphate and phosphoenolpyruvate: step 6/7. Catalyzes the transfer of the enolpyruvyl moiety of phosphoenolpyruvate (PEP) to the 5-hydroxyl of shikimate-3-phosphate (S3P) to produce enolpyruvyl shikimate-3-phosphate and inorganic phosphate. This is 3-phosphoshikimate 1-carboxyvinyltransferase from Histophilus somni (strain 2336) (Haemophilus somnus).